The sequence spans 91 residues: MFLFTNGKVLWGAVIAAFILSIVFYPFLPTQMPIHYDVANSPDLTVNKLAGTVMLPVLMVVFAWARKINWQFVFAVYILLICHIVVLCLAL.

The next 3 helical transmembrane spans lie at Val9–Pro29, Leu44–Trp64, and Gln71–Leu91.

Its subcellular location is the cell membrane. This is an uncharacterized protein from Bacillus subtilis (strain 168).